The chain runs to 367 residues: Phosphoribosylaminoimidazole-succinocarboxamide synthase (367 aa).

This sequence belongs to the SAICAR synthetase family.

It catalyses the reaction 5-amino-1-(5-phospho-D-ribosyl)imidazole-4-carboxylate + L-aspartate + ATP = (2S)-2-[5-amino-1-(5-phospho-beta-D-ribosyl)imidazole-4-carboxamido]succinate + ADP + phosphate + 2 H(+). It functions in the pathway purine metabolism; IMP biosynthesis via de novo pathway; 5-amino-1-(5-phospho-D-ribosyl)imidazole-4-carboxamide from 5-amino-1-(5-phospho-D-ribosyl)imidazole-4-carboxylate: step 1/2. The polypeptide is Phosphoribosylaminoimidazole-succinocarboxamide synthase (Vibrio parahaemolyticus serotype O3:K6 (strain RIMD 2210633)).